The sequence spans 77 residues: Translational regulator CsrA (77 aa).

The protein belongs to the CsrA/RsmA family. As to quaternary structure, homodimer; the beta-strands of each monomer intercalate to form a hydrophobic core, while the alpha-helices form wings that extend away from the core.

Its subcellular location is the cytoplasm. A translational regulator that binds mRNA to regulate translation initiation and/or mRNA stability. Usually binds in the 5'-UTR at or near the Shine-Dalgarno sequence preventing ribosome-binding, thus repressing translation. Its main target seems to be the major flagellin gene, while its function is anatagonized by FliW. This chain is Translational regulator CsrA, found in Desulfitobacterium hafniense (strain Y51).